The chain runs to 91 residues: Acylphosphatase (91 aa).

Positions 5 to 91 constitute an Acylphosphatase-like domain; sequence CSKFIVSGHV…EHDYQGFEIL (87 aa). Catalysis depends on residues Arg-20 and Asn-38.

It belongs to the acylphosphatase family.

The catalysed reaction is an acyl phosphate + H2O = a carboxylate + phosphate + H(+). This is Acylphosphatase (acyP) from Vibrio cholerae serotype O1 (strain ATCC 39315 / El Tor Inaba N16961).